Here is a 201-residue protein sequence, read N- to C-terminus: Recombination protein RecR (201 aa).

The C4-type zinc finger occupies cysteine 57 to cysteine 72. In terms of domain architecture, Toprim spans glycine 81–proline 176.

The protein belongs to the RecR family.

May play a role in DNA repair. It seems to be involved in an RecBC-independent recombinational process of DNA repair. It may act with RecF and RecO. This Edwardsiella ictaluri (strain 93-146) protein is Recombination protein RecR.